The primary structure comprises 768 residues: Transferrin receptor protein 1 (768 aa).

The Cytoplasmic segment spans residues methionine 1–tyrosine 68. The interval methionine 1–cysteine 70 is mediates interaction with SH3BP4. Residues serine 10 and serine 19 each carry the phosphoserine modification. Tyrosine 20 bears the Phosphotyrosine mark. The Endocytosis signal signature appears at tyrosine 20–phenylalanine 23. At threonine 21 the chain carries Phosphothreonine. Serine 24 carries the post-translational modification Phosphoserine. The Stop-transfer sequence signature appears at lysine 61–arginine 64. A helical membrane pass occupies residues valine 69 to leucine 89. Cysteine 70 is lipidated: S-palmitoyl cysteine. Residues alanine 90 to phenylalanine 768 lie on the Extracellular side of the membrane. The PA domain occupies serine 231 to phenylalanine 321. N-linked (GlcNAc...) asparagine glycosylation is found at asparagine 259 and asparagine 325. Residues threonine 577–phenylalanine 768 are ligand-binding. The short motif at arginine 654–aspartate 656 is the Cell attachment site element. Residues asparagine 730 and asparagine 735 are each glycosylated (N-linked (GlcNAc...) asparagine).

The protein belongs to the peptidase M28 family. M28B subfamily. In terms of assembly, homodimer; disulfide-linked. Binds one transferrin or HFE molecule per subunit. Interacts with SH3BP4. Interacts with SH3BP3. Interacts with STEAP3; facilitates TFRC endocytosis in erythroid precursor cells. Post-translationally, stearoylated by ZDHHC6 which inhibits TFRC-mediated activation of the JNK pathway and promotes mitochondrial fragmentation. Stearoylation does not affect iron uptake.

Its subcellular location is the cell membrane. It localises to the melanosome. In terms of biological role, cellular uptake of iron occurs via receptor-mediated endocytosis of ligand-occupied transferrin receptor into specialized endosomes. Endosomal acidification leads to iron release. The apotransferrin-receptor complex is then recycled to the cell surface with a return to neutral pH and the concomitant loss of affinity of apotransferrin for its receptor. Transferrin receptor is necessary for development of erythrocytes and the nervous system. Positively regulates T and B cell proliferation through iron uptake. Acts as a lipid sensor that regulates mitochondrial fusion by regulating activation of the JNK pathway. When dietary levels of stearate (C18:0) are low, promotes activation of the JNK pathway, resulting in HUWE1-mediated ubiquitination and subsequent degradation of the mitofusin MFN2 and inhibition of mitochondrial fusion. When dietary levels of stearate (C18:0) are high, TFRC stearoylation inhibits activation of the JNK pathway and thus degradation of the mitofusin MFN2. Mediates uptake of NICOL1 into fibroblasts where it may regulate extracellular matrix production. This is Transferrin receptor protein 1 (TFRC) from Sus scrofa (Pig).